We begin with the raw amino-acid sequence, 1191 residues long: Zinc finger protein ush (1191 aa).

Disordered regions lie at residues 1-153 and 169-194; these read MLSS…PKYP and PDAKELTLPDSRLLAPPPLVKPDTQA. Residues 19–28 show a composition bias toward basic and acidic residues; it reads VDSRDSKDLS. Positions 61-73 are enriched in acidic residues; sequence IDDDADEDAEFEE. S116 and S118 each carry phosphoserine. Positions 130-151 are enriched in pro residues; sequence ATPPSEPEASPCPSPSPCPTPK. The CCHC FOG-type 1 zinc-finger motif lies at 202 to 235; sequence LLKPARFMCLPCGIAFSSPSTLEAHQAYYCSHRI. The Zn(2+) site is built by C210, C213, H226, and C231. The interval 239–274 is disordered; that stretch reads DEAGSDKSGAGGSGATAGDAAGLTGGSTEPPAKMAR. Over residues 254–266 the composition is skewed to low complexity; sequence TAGDAAGLTGGST. The C2H2-type 1 zinc-finger motif lies at 279-301; sequence YGCTQCSYSADKKVSLNRHMRMH. The tract at residues 304–338 is disordered; the sequence is SPAAPTLAGLPSLLQNGIAPPGVTPNPMEDSSSQQ. The CCHC FOG-type 2 zinc-finger motif lies at 335 to 368; the sequence is SSQQTDRYCSHCDIRFNNIKTYRAHKQHYCSSRR. Residues C343, C346, H359, and C364 each coordinate Zn(2+). 3 disordered regions span residues 361–413, 504–540, and 601–635; these read QHYC…ARNK, EPERPSAPSSAAEATEAKSSPPEPKRKEAGLTRESAP, and APSLPSSPSMSPSPKRRAISPRSSGAGSASSMSPP. The segment covering 383-394 has biased composition (gly residues); the sequence is AGSGPGSAGGSI. Composition is skewed to low complexity over residues 509–523, 602–613, and 620–635; these read SAPSSAAEATEAKSS, PSLPSSPSMSPS, and SPRSSGAGSASSMSPP. 2 consecutive CCHC FOG-type zinc fingers follow at residues 720 to 753 and 791 to 824; these read YVKKGVSKCMECNIVFCKYENYLAHKQHYCSARS and PVAYQQLICAACGIKYTSLDNLRAHQNYYCPKGG. Residues C728, C731, H744, C749, C799, C802, H815, and C820 each contribute to the Zn(2+) site. 3 C2H2-type zinc fingers span residues 882–907, 910–932, and 983–1006; these read NKCPVCGVVSPTAALAKKHMEMHGTV, YRCSICQYKGNTLRGMRTHIRTH, and FNCDYCNYVSTYKGNVLRHMKLMH. Residues 1011–1073 are disordered; sequence INSPSISPDT…HENNNSPIAT (63 aa). S1013, S1015, and S1017 each carry phosphoserine. Residues 1025 to 1040 are compositionally biased toward polar residues; it reads VTSNPTTNQHSNSDVS. Residues 1113–1146 form a CCHC FOG-type 5 zinc finger; the sequence is AAEVMKKYCSTCDISFNYVKTYLAHKQFYCKNKP. Zn(2+) contacts are provided by C1121, C1124, H1137, and C1142. The residue at position 1156 (S1156) is a Phosphoserine.

The protein belongs to the FOG (Friend of GATA) family. In terms of assembly, interacts with pnr, although weak this interaction is essential. Interacts with the isoform SrpNC of srp. Interacts with CtBP corepressor. As to expression, first expressed in stage 5 at high levels in the primordium of the amnioserosa. Also expressed in germ band extending embryos in cells of the developing anterior and posterior midgut and in hemocyte precursors present in the cephalic mesoderm. In embryonic stage 8, it is expressed in blood cell precursors. By stage 10, it is expressed in hemocyte precursors that have spread throughout the lateral and ventral head mesoderm. By stage 11, it is expressed in the dorsal ectoderm and in precursor cells of the hemocytes and fat body. As embryogenesis proceeds, it is also expressed in stage 13 plasmatocytes migrating throughout the head mesoderm and down the ventral midline. By late embryogenesis, expression strongly decreases but remains in the dorsal ectoderm during dorsal closure, in cells within, or associated with, the central nervous system, and in plasmatocytes circulating throughout the embryonic hemolymph. During larval development, it is expressed in primary and secondary lobes of lymph glands. Expressed in the dorsal part of the thoracic imaginal disk.

It is found in the nucleus. Transcription regulator that modulates expression mediated by transcription factors of the GATA family such as pnr and srp. Represses transcription of proneural achaete-scute complex (AS-C), which is usually activated by pnr. Involved in cardiogenesis, blood, and eye development. During hematopoiesis, it is required to restrict the number of crystal cells, probably via its interaction with the isoform SrpNC of srp. Negatively regulates expression of sr. Probably acts by interacting with the GATA-type zinc finger of proteins such as pnr and srp, possibly antagonizing the interaction between the GATA-type zinc finger and some cofactor. The polypeptide is Zinc finger protein ush (ush) (Drosophila melanogaster (Fruit fly)).